Consider the following 156-residue polypeptide: Endogenous retrovirus group K member 24 Pro protein (156 aa).

One can recognise a Peptidase A2 domain in the interval 21 to 96 (FEGLVDTGAD…IPLNLWGRDL (76 aa)). Aspartate 26 is a catalytic residue. The region spanning 111-156 (YSPTSQKIMTKMGYIPGKGLGKNEDGIKIPFEAKINQKREGIGYPF) is the G-patch domain.

The protein belongs to the peptidase A2 family. HERV class-II K(HML-2) subfamily. In terms of assembly, active as a homodimer. Autoproteolytically processed at the N-terminus. Expected C-terminal autoprocessing not detected. The sequence shown is that of the processed Pro protein.

It catalyses the reaction Processing at the authentic HIV-1 PR recognition site and release of the mature p17 matrix and the p24 capsid protein, as a result of the cleavage of the -SQNY-|-PIVQ- cleavage site.. In terms of biological role, retroviral proteases have roles in processing of the primary translation products and the maturation of the viral particle. Endogenous Pro proteins may have kept, lost or modified their original function during evolution. This endogenous protein has retained most of the characteristics of retroviral proteases. The chain is Endogenous retrovirus group K member 24 Pro protein (ERVK-24) from Homo sapiens (Human).